Here is a 467-residue protein sequence, read N- to C-terminus: DNA polymerase IV (467 aa).

The UmuC domain maps to 5–187; sequence VLHIDMDAFF…LPVGALWGVG (183 aa). Residues aspartate 9 and aspartate 104 each contribute to the Mg(2+) site. Glutamate 105 is an active-site residue. Disordered stretches follow at residues 364–386 and 428–449; these read PDTD…VEAP and TKGR…DPLD.

Belongs to the DNA polymerase type-Y family. As to quaternary structure, monomer. Requires Mg(2+) as cofactor.

It is found in the cytoplasm. It catalyses the reaction DNA(n) + a 2'-deoxyribonucleoside 5'-triphosphate = DNA(n+1) + diphosphate. Its function is as follows. Poorly processive, error-prone DNA polymerase involved in untargeted mutagenesis. Copies undamaged DNA at stalled replication forks, which arise in vivo from mismatched or misaligned primer ends. These misaligned primers can be extended by PolIV. Exhibits no 3'-5' exonuclease (proofreading) activity. May be involved in translesional synthesis, in conjunction with the beta clamp from PolIII. The sequence is that of DNA polymerase IV from Corynebacterium glutamicum (strain R).